We begin with the raw amino-acid sequence, 767 residues long: MGSACEAGTDEPSRDDVKGTGNGILENGHSHKSEEEEWRNGMGEDLPNGHSTPPEPQQTDEQKEHQVRIVRWERFLPVKTLRVLLVENDDSTRQVVSALLRKCCYEVIPAENGLHAWQCLEDLQNHIDLVLTEVVMPRLSGIGLLSKITSHKICKDIPVIMMSSNDSMGTVFKCLSKGAVDFLVKPIRKNELKNLWQHVWRRCHSSSGSGSESGIRTQKCTKPKVDDEYENNSGSNNDNEDDDDNDEDDDDLSVGHNARDGSDNGSGTQSSWTKRAVEIDSPQQMSPDQPSDLPDSTCAQVIHPTSEICSNRWLPTANKRSGKKHKENNDDSMGKYLEIGAPRNSSMEYQSSPREMSVNPTEKQHETLMPQSKTTRETDSRNTQNEPTTQTVDLISSIARSTDDKQVVRINNAPDCSSKVPDGNDKNRDSLIDMTSEELGLKRLKTTGSATEIHDERNILKRSDLSAFTRYHTTVASNQGGAGFGGSCSPQDNSSEALKTDSNCKVKSNSDAAEIKQGSNGSSNNNDMGSSTKNAITKPSSNRGKVISPSAVKATQHTSAFHPVQRQTSPANVVGKDKVDEGIANGVNVGHPVDVQNSFMQHHHHVHYYVHVMTQQQQQPSIERGSSDAQCGSSNVFDPPIEGHAANYSVNGSFSGGHNGNNGQRGPSTAPNVGRPNMETVNGIVDENGAGGGNGSGSGSGNDLYQNGVCYREAALNKFRQKRKVRNFGKKVRYQSRKRLAEQRPRIRGQFVRQSGQEDQAGQDEDR.

Positions 1–64 (MGSACEAGTD…EPQQTDEQKE (64 aa)) are disordered. Positions 82–200 (RVLLVENDDS…ELKNLWQHVW (119 aa)) constitute a Response regulatory domain. Positions 205 to 214 (SSSGSGSESG) are enriched in low complexity. Disordered stretches follow at residues 205–272 (SSSG…QSSW), 312–388 (RWLP…NEPT), 476–546 (ASNQ…RGKV), 646–701 (ANYS…SGSG), and 727–767 (NFGK…DEDR). Residues 238-252 (DNEDDDDNDEDDDDL) are compositionally biased toward acidic residues. Composition is skewed to polar residues over residues 263–272 (DNGSGTQSSW), 343–361 (RNSS…VNPT), and 488–497 (CSPQDNSSEA). Residues 518–531 (GSNGSSNNNDMGSS) are compositionally biased toward low complexity. A compositionally biased stretch (polar residues) spans 532 to 543 (TKNAITKPSSNR). Gly residues predominate over residues 689-700 (GAGGGNGSGSGS). The CCT domain occupies 712-754 (REAALNKFRQKRKVRNFGKKVRYQSRKRLAEQRPRIRGQFVRQ). A compositionally biased stretch (basic residues) spans 727–738 (NFGKKVRYQSRK).

It belongs to the ARR-like family.

It localises to the nucleus. Controls photoperiodic flowering response. Seems to be one of the component of the circadian clock. Expression of several members of the ARR-like family is controlled by circadian rhythm. The particular coordinated sequential expression of PRR73, PRR37, PRR95, PRR59 and PPR1 result to circadian waves that may be at the basis of the endogenous circadian clock. This Oryza sativa subsp. indica (Rice) protein is Two-component response regulator-like PRR73 (PRR73).